The primary structure comprises 292 residues: 11-beta-hydroxysteroid dehydrogenase 1 (292 aa).

Over 1 to 7 (MAFMKKY) the chain is Cytoplasmic. A helical; Signal-anchor for type II membrane protein transmembrane segment spans residues 8-24 (LLPILGLFMAYYYYSAN). Over 25–292 (EEFRPEMLQG…SYNMDRFINK (268 aa)) the chain is Lumenal. Residues 41-67 (GASK…TARS), 92-93 (TM), and 119-121 (NHI) contribute to the NADP(+) site. N-linked (GlcNAc...) asparagine glycans are attached at residues asparagine 123 and asparagine 162. Residue serine 170 coordinates substrate. Catalysis depends on tyrosine 183, which acts as the Proton acceptor. Residue 183–187 (YSASK) participates in NADP(+) binding. Asparagine 207 carries N-linked (GlcNAc...) asparagine glycosylation. 218–222 (IDTET) contacts NADP(+).

It belongs to the short-chain dehydrogenases/reductases (SDR) family. Homodimer. Post-translationally, glycosylated. Widely expressed, highest expression in liver, lower in testis, ovary, lung, foreskin fibroblasts, and much lower in kidney. Expressed in liver (at protein level). Expressed in the basal cells of the corneal epithelium and in the ciliary nonpigmented epithelium (both at mRNA and at protein level).

The protein localises to the endoplasmic reticulum membrane. It carries out the reaction an 11beta-hydroxysteroid + NADP(+) = an 11-oxosteroid + NADPH + H(+). The catalysed reaction is cortisone + NADPH + H(+) = cortisol + NADP(+). The enzyme catalyses corticosterone + NADP(+) = 11-dehydrocorticosterone + NADPH + H(+). It catalyses the reaction a 7beta-hydroxysteroid + NADP(+) = a 7-oxosteroid + NADPH + H(+). It carries out the reaction 7-oxocholesterol + NADPH + H(+) = 7beta-hydroxycholesterol + NADP(+). The catalysed reaction is chenodeoxycholate + NADP(+) = 7-oxolithocholate + NADPH + H(+). The enzyme catalyses 7-oxolithocholate + NADPH + H(+) = ursodeoxycholate + NADP(+). It catalyses the reaction glycochenodeoxycholate + NADP(+) = 7-oxoglycolithocholate + NADPH + H(+). It carries out the reaction taurochenodeoxycholate + NADP(+) = 7-oxotaurolithocholate + NADPH + H(+). The catalysed reaction is tauroursodeoxycholate + NADP(+) = 7-oxotaurolithocholate + NADPH + H(+). The enzyme catalyses glycoursodeoxycholate + NADP(+) = 7-oxoglycolithocholate + NADPH + H(+). It catalyses the reaction 7-oxopregnenolone + NADPH + H(+) = 7beta-hydroxypregnenolone + NADP(+). It carries out the reaction 3beta,7alpha-dihydroxyandrost-5-en-17-one + NADP(+) = 3beta-hydroxy-5-androstene-7,17-dione + NADPH + H(+). The catalysed reaction is 3beta-hydroxy-5-androstene-7,17-dione + NADPH + H(+) = 3beta,7beta-dihydroxyandrost-5-en-17-one + NADP(+). The enzyme catalyses 3beta-hydroxy-5alpha-androstane-7,17-dione + NADPH + H(+) = 3beta,7beta-dihydroxy-5alpha-androstan-17-one + NADP(+). The protein operates within steroid metabolism. With respect to regulation, hexose-6-phosphate dehydrogenase (H6PD) provides cosubstrate NADPH, and the glucose-6-phosphate transporter in the ER-membrane supplies the substrate for H6PDH, their activities stimulate the reduction of cortisone and abolish the oxidation of cortisol. Controls the reversible conversion of biologically active glucocorticoids such as cortisone to cortisol, and 11-dehydrocorticosterone to corticosterone in the presence of NADP(H). Participates in the corticosteroid receptor-mediated anti-inflammatory response, as well as metabolic and homeostatic processes. Plays a role in the secretion of aqueous humor in the eye, maintaining a normotensive, intraocular environment. Bidirectional in vitro, predominantly functions as a reductase in vivo, thereby increasing the concentration of active glucocorticoids. It has broad substrate specificity, besides glucocorticoids, it accepts other steroid and sterol substrates. Interconverts 7-oxo- and 7-hydroxy-neurosteroids such as 7-oxopregnenolone and 7beta-hydroxypregnenolone, 7-oxodehydroepiandrosterone (3beta-hydroxy-5-androstene-7,17-dione) and 7beta-hydroxydehydroepiandrosterone (3beta,7beta-dihydroxyandrost-5-en-17-one), among others. Catalyzes the stereo-specific conversion of the major dietary oxysterol, 7-ketocholesterol (7-oxocholesterol), into the more polar 7-beta-hydroxycholesterol metabolite. 7-oxocholesterol is one of the most important oxysterols, it participates in several events such as induction of apoptosis, accumulation in atherosclerotic lesions, lipid peroxidation, and induction of foam cell formation. Mediates the 7-oxo reduction of 7-oxolithocholate mainly to chenodeoxycholate, and to a lesser extent to ursodeoxycholate, both in its free form and when conjugated to glycine or taurine, providing a link between glucocorticoid activation and bile acid metabolism. Catalyzes the synthesis of 7-beta-25-dihydroxycholesterol from 7-oxo-25-hydroxycholesterol in vitro, which acts as a ligand for the G-protein-coupled receptor (GPCR) Epstein-Barr virus-induced gene 2 (EBI2) and may thereby regulate immune cell migration. This is 11-beta-hydroxysteroid dehydrogenase 1 from Homo sapiens (Human).